The chain runs to 301 residues: Acetylglutamate kinase (301 aa).

Residues 68-69, arginine 90, and asparagine 195 each bind substrate; that span reads GG.

The protein belongs to the acetylglutamate kinase family. ArgB subfamily.

The protein localises to the cytoplasm. The enzyme catalyses N-acetyl-L-glutamate + ATP = N-acetyl-L-glutamyl 5-phosphate + ADP. Its pathway is amino-acid biosynthesis; L-arginine biosynthesis; N(2)-acetyl-L-ornithine from L-glutamate: step 2/4. Its function is as follows. Catalyzes the ATP-dependent phosphorylation of N-acetyl-L-glutamate. This Pseudomonas putida (strain W619) protein is Acetylglutamate kinase.